The following is a 282-amino-acid chain: Succinate dehydrogenase [ubiquinone] iron-sulfur subunit, mitochondrial (282 aa).

A mitochondrion-targeting transit peptide spans 1 to 30; the sequence is MAATVGVSLKRGFPAAVLGRVGLQFQACRG. Residues 42–135 enclose the 2Fe-2S ferredoxin-type domain; sequence KKFAIYRWDP…VSKIYPLPHM (94 aa). N6-acetyllysine occurs at positions 53 and 57. Cys-95, Cys-100, Cys-103, and Cys-115 together coordinate [2Fe-2S] cluster. An interaction with SDHAF1 region spans residues 148–220; sequence FYAQYKSIEP…PAVLMQAYRW (73 aa). Residues 178–208 form the 4Fe-4S ferredoxin-type domain; the sequence is DREKLDGLYECILCACCSTSCPSYWWNGDKY. 3 residues coordinate [4Fe-4S] cluster: Cys-188, Cys-191, and Cys-194. Cys-198 contributes to the [3Fe-4S] cluster binding site. Trp-203 lines the a ubiquinone pocket. Residues Cys-245 and Cys-251 each contribute to the [3Fe-4S] cluster site. Residue Cys-255 coordinates [4Fe-4S] cluster.

It belongs to the succinate dehydrogenase/fumarate reductase iron-sulfur protein family. As to quaternary structure, component of complex II composed of four subunits: the flavoprotein (FP) SDHA, iron-sulfur protein (IP) SDHB, and a cytochrome b560 composed of SDHC and SDHD. Interacts with SDHAF1; the interaction is required for iron-sulfur cluster incorporation into SDHB. [2Fe-2S] cluster is required as a cofactor. [3Fe-4S] cluster serves as cofactor. Requires [4Fe-4S] cluster as cofactor.

It localises to the mitochondrion inner membrane. It catalyses the reaction a quinone + succinate = fumarate + a quinol. The catalysed reaction is (R)-malate + a quinone = enol-oxaloacetate + a quinol. The enzyme catalyses (S)-malate + a quinone = enol-oxaloacetate + a quinol. Its pathway is carbohydrate metabolism; tricarboxylic acid cycle; fumarate from succinate (eukaryal route): step 1/1. Its activity is regulated as follows. Enol-oxaloacetate inhibits the succinate dehydrogenase activity. Functionally, iron-sulfur protein (IP) subunit of the succinate dehydrogenase complex (mitochondrial respiratory chain complex II), responsible for transferring electrons from succinate to ubiquinone (coenzyme Q). SDH also oxidizes malate to the non-canonical enol form of oxaloacetate, enol-oxaloacetate. Enol-oxaloacetate, which is a potent inhibitor of the succinate dehydrogenase activity, is further isomerized into keto-oxaloacetate. In Mus musculus (Mouse), this protein is Succinate dehydrogenase [ubiquinone] iron-sulfur subunit, mitochondrial (Sdhb).